The sequence spans 589 residues: Acyl-CoA ligase SID4 (589 aa).

A PTS2-type peroxisomal targeting signal motif is present at residues 12–20 (RLQQTLNHI). Residues 228 to 236 (TSGSTGNPK), 367 to 372 (SSYGLT), aspartate 458, and arginine 473 contribute to the ATP site. Residue threonine 372 participates in substrate binding. Residues 481–483 (GGE), lysine 547, and 555–557 (FGL) each bind CoA. ATP is bound at residue lysine 572.

It belongs to the ATP-dependent AMP-binding enzyme family.

It localises to the peroxisome. The protein operates within siderophore biosynthesis. Its function is as follows. Acyl-CoA ligase; part of the gene cluster that mediates the biosynthesis of hydroxamate-containing siderophores that play a critical role in virulence via intracellular iron acquisition during macrophage infection. This is Acyl-CoA ligase SID4 from Ajellomyces capsulatus (Darling's disease fungus).